The primary structure comprises 261 residues: Glucosamine-6-phosphate deaminase (261 aa).

D67 acts as the Proton acceptor; for enolization step in catalysis. The active-site For ring-opening step is the D136. Residue H138 is the Proton acceptor; for ring-opening step of the active site. The active-site For ring-opening step is E143.

Belongs to the glucosamine/galactosamine-6-phosphate isomerase family. NagB subfamily.

The enzyme catalyses alpha-D-glucosamine 6-phosphate + H2O = beta-D-fructose 6-phosphate + NH4(+). It participates in amino-sugar metabolism; N-acetylneuraminate degradation; D-fructose 6-phosphate from N-acetylneuraminate: step 5/5. Functionally, catalyzes the reversible isomerization-deamination of glucosamine 6-phosphate (GlcN6P) to form fructose 6-phosphate (Fru6P) and ammonium ion. This is Glucosamine-6-phosphate deaminase from Mycolicibacterium smegmatis (strain ATCC 700084 / mc(2)155) (Mycobacterium smegmatis).